Here is a 270-residue protein sequence, read N- to C-terminus: Tetraspanin-18 (270 aa).

The Cytoplasmic portion of the chain corresponds to 1–15 (MRRNCCHVSFASTLK). The helical transmembrane segment at 16-36 (ILNFVQAFIGVSIIIYSIWML) threads the bilayer. Residues 37–99 (HEYSRHLPVD…LRSLDLPAPW (63 aa)) lie on the Extracellular side of the membrane. A helical membrane pass occupies residues 100–120 (FIYSFMAVGILVCIVTFIGFI). Over 121-132 (AAEAINGCCLCF) the chain is Cytoplasmic. The helical transmembrane segment at 133 to 153 (YSILKTLLILLEAALVAYIAI) threads the bilayer. The Extracellular segment spans residues 154–183 (DRHWEKDLPYDPTGELSSLRAFIEENIDIC). The chain crosses the membrane as a helical span at residues 184–204 (KWVGIAVVAVQLLSLLLAMVL). At 205–270 (RAMVSTPKPE…NQSPPVNPKG (66 aa)) the chain is on the cytoplasmic side. Residues 212 to 249 (KPELDEEEDDENPRSRTWDPLLGPQGNQAPAGSSKIEN) form a disordered region. Residues 236-249 (QGNQAPAGSSKIEN) show a composition bias toward polar residues. Ser-245 carries the post-translational modification Phosphoserine.

This sequence belongs to the tetraspanin (TM4SF) family. In terms of assembly, homodimer. Constituent of tobamovirus replication complex. In terms of tissue distribution, expressed in rosette leaves.

The protein localises to the membrane. Its subcellular location is the vacuole membrane. In terms of biological role, may be involved in the regulation of cell differentiation. Its function is as follows. Promotes intracellular multiplication of tobamoviruses, probably being a component of the replication complex. The polypeptide is Tetraspanin-18 (TOM2AH2) (Arabidopsis thaliana (Mouse-ear cress)).